We begin with the raw amino-acid sequence, 196 residues long: MTDDQILAEFRAADALLQGHFLLSSGRHSEYYLQCARVLMDTERAGRLAAALAAKLPRELKQAIDLVVSPAMGGVIIGHEMGRALGKPAIFVERPTGTFELRRGFTIDPGAKVLMVEDVVTTGLSSREAMEAVRAAGGEVVAEAALVDRSAGSNIDLGVPFYPLVAINFPTYAADELPPELAGTEAIKPGSRSVAA.

117–125 (EDVVTTGLS) serves as a coordination point for 5-phospho-alpha-D-ribose 1-diphosphate. Thr-121 and Arg-149 together coordinate orotate.

The protein belongs to the purine/pyrimidine phosphoribosyltransferase family. PyrE subfamily. Homodimer. It depends on Mg(2+) as a cofactor.

The catalysed reaction is orotidine 5'-phosphate + diphosphate = orotate + 5-phospho-alpha-D-ribose 1-diphosphate. It functions in the pathway pyrimidine metabolism; UMP biosynthesis via de novo pathway; UMP from orotate: step 1/2. Functionally, catalyzes the transfer of a ribosyl phosphate group from 5-phosphoribose 1-diphosphate to orotate, leading to the formation of orotidine monophosphate (OMP). The sequence is that of Orotate phosphoribosyltransferase from Sphingopyxis alaskensis (strain DSM 13593 / LMG 18877 / RB2256) (Sphingomonas alaskensis).